The sequence spans 203 residues: Outer-membrane lipoprotein carrier protein (203 aa).

The signal sequence occupies residues 1-21; that stretch reads MKKLIISCCLLATFSAAGAWA. The disordered stretch occupies residues 174-203; sequence ALKSQQSGPISADKFKFRPPKGVTVDDQRQ.

The protein belongs to the LolA family. As to quaternary structure, monomer.

The protein localises to the periplasm. Its function is as follows. Participates in the translocation of lipoproteins from the inner membrane to the outer membrane. Only forms a complex with a lipoprotein if the residue after the N-terminal Cys is not an aspartate (The Asp acts as a targeting signal to indicate that the lipoprotein should stay in the inner membrane). This is Outer-membrane lipoprotein carrier protein from Erwinia tasmaniensis (strain DSM 17950 / CFBP 7177 / CIP 109463 / NCPPB 4357 / Et1/99).